A 234-amino-acid chain; its full sequence is Myelin protein zero-like protein 3 (234 aa).

The signal sequence occupies residues 1-31 (MQQSGVPGSRGCALCPLLGVLFFQGVYVIFS). An Ig-like V-type domain is found at 32–148 (LEIKADAHVR…NIPATELTVT (117 aa)). Topologically, residues 32 to 158 (LEIKADAHVR…ERGFGTMLSS (127 aa)) are extracellular. Cys52 and Cys128 are disulfide-bonded. Residue Asn123 is glycosylated (N-linked (GlcNAc...) asparagine). The helical transmembrane segment at 159–179 (VALLSILVFIPSTVVVILLLV) threads the bilayer. The Cytoplasmic portion of the chain corresponds to 180-234 (RMGRKSAGLKKRSKSGYKKSSIEVSDDTDQEGDDCMAKLCVRCAECVDSDYEETY).

Belongs to the myelin P0 protein family.

It is found in the membrane. Functionally, mediates homophilic cell-cell adhesion. In Bos taurus (Bovine), this protein is Myelin protein zero-like protein 3 (MPZL3).